The following is a 353-amino-acid chain: MTSPLSDLLNLDLSDTKKIIAEYIWIGGSGMDIRSKARTLPGPVSNPTKLPKWNYDGSSTDQAAGDDSEVILYPQAIFKDPFRKGNNILVMCDAYRPAGDPIPTNNRHKAVKIFDHPNVKAEEPWFGIEQEYTLLKKDVKWPLGWPLGGFPGPQGPYYCAVGADKAFGRDIVDAHYKACLYSGLSIGGANGEVMPGQWEFQISPTVGIGAGDQLWVARYILERITEICGVIVSFDPKPIQGDWNGAAAHTNFSTKSMRKDGGLDLIKEAIKKLEVKHKQHIAAYGEGNERRLTGKHETADINTFSWGVADRGASVRVGRDTEKEGKGYFEDRRPSSNMDPYLVTSMIAETTIL.

Threonine 2 is subject to N-acetylthreonine. The residue at position 3 (serine 3) is a Phosphoserine. The GS beta-grasp domain occupies 19-99 (IIAEYIWIGG…VMCDAYRPAG (81 aa)). Residues 106 to 353 (NRHKAVKIFD…TSMIAETTIL (248 aa)) form the GS catalytic domain.

The protein belongs to the glutamine synthetase family. As to quaternary structure, homooctamer. As to expression, not expressed in roots.

It localises to the cytoplasm. It carries out the reaction L-glutamate + NH4(+) + ATP = L-glutamine + ADP + phosphate + H(+). This chain is Glutamine synthetase cytosolic isozyme 1-5 (GLN1-5), found in Arabidopsis thaliana (Mouse-ear cress).